Here is a 331-residue protein sequence, read N- to C-terminus: Lipoyl synthase (331 aa).

A disordered region spans residues 1–33 (MSDALIATSSEAPQSPAEQYDPTRKQKSADKTA). A compositionally biased stretch (polar residues) spans 7–17 (ATSSEAPQSPA). Residues 21–33 (DPTRKQKSADKTA) show a composition bias toward basic and acidic residues. Residues Cys-78, Cys-83, Cys-89, Cys-104, Cys-108, Cys-111, and Ser-318 each contribute to the [4Fe-4S] cluster site. Residues 89–307 (CFGKGTATFM…EEEAYKMGFT (219 aa)) form the Radical SAM core domain.

This sequence belongs to the radical SAM superfamily. Lipoyl synthase family. Requires [4Fe-4S] cluster as cofactor.

It localises to the cytoplasm. The enzyme catalyses [[Fe-S] cluster scaffold protein carrying a second [4Fe-4S](2+) cluster] + N(6)-octanoyl-L-lysyl-[protein] + 2 oxidized [2Fe-2S]-[ferredoxin] + 2 S-adenosyl-L-methionine + 4 H(+) = [[Fe-S] cluster scaffold protein] + N(6)-[(R)-dihydrolipoyl]-L-lysyl-[protein] + 4 Fe(3+) + 2 hydrogen sulfide + 2 5'-deoxyadenosine + 2 L-methionine + 2 reduced [2Fe-2S]-[ferredoxin]. It participates in protein modification; protein lipoylation via endogenous pathway; protein N(6)-(lipoyl)lysine from octanoyl-[acyl-carrier-protein]: step 2/2. Functionally, catalyzes the radical-mediated insertion of two sulfur atoms into the C-6 and C-8 positions of the octanoyl moiety bound to the lipoyl domains of lipoate-dependent enzymes, thereby converting the octanoylated domains into lipoylated derivatives. This is Lipoyl synthase from Cupriavidus necator (strain ATCC 17699 / DSM 428 / KCTC 22496 / NCIMB 10442 / H16 / Stanier 337) (Ralstonia eutropha).